The primary structure comprises 329 residues: Aurora kinase B (329 aa).

Over residues 1-14 (MTLSRAKHANRNHL) the composition is skewed to basic residues. The interval 1-21 (MTLSRAKHANRNHLPHLLAKV) is disordered. A Protein kinase domain is found at 53 to 305 (FEMGAHLGRG…LVDVMTHYWV (253 aa)). ATP contacts are provided by residues 59–67 (LGRGKFGRV) and lysine 82. Aspartate 178 functions as the Proton acceptor in the catalytic mechanism.

This sequence belongs to the protein kinase superfamily. Ser/Thr protein kinase family. Aurora subfamily. Interacts with Incenp and Cdc37. The cofactor is Mg(2+).

The protein resides in the chromosome. Its subcellular location is the cytoplasm. The protein localises to the cytoskeleton. It is found in the midbody. It carries out the reaction L-seryl-[protein] + ATP = O-phospho-L-seryl-[protein] + ADP + H(+). It catalyses the reaction L-threonyl-[protein] + ATP = O-phospho-L-threonyl-[protein] + ADP + H(+). Serine/threonine-protein kinase that mediates both meiotic and mitotic chromosome segregation. Required for histone H3 'Ser-10' phosphorylation. Phosphorylates mei-S332 within residues 124-126 and stabilizes its association with centromeres during meiosis. May regulate the function of the ESCRT-III complex core component shrb during abscission of germline cells in oogenesis. The protein is Aurora kinase B of Drosophila melanogaster (Fruit fly).